The following is a 506-amino-acid chain: Maturase K (506 aa).

This sequence belongs to the intron maturase 2 family. MatK subfamily.

The protein resides in the plastid. Its subcellular location is the chloroplast. Its function is as follows. Usually encoded in the trnK tRNA gene intron. Probably assists in splicing its own and other chloroplast group II introns. This is Maturase K from Calluna vulgaris (Heather).